Here is a 495-residue protein sequence, read N- to C-terminus: ATP synthase subunit beta, chloroplastic (495 aa).

172–179 (GGAGVGKT) is a binding site for ATP.

This sequence belongs to the ATPase alpha/beta chains family. As to quaternary structure, F-type ATPases have 2 components, CF(1) - the catalytic core - and CF(0) - the membrane proton channel. CF(1) has five subunits: alpha(3), beta(3), gamma(1), delta(1), epsilon(1). CF(0) has four main subunits: a(1), b(1), b'(1) and c(9-12).

The protein localises to the plastid. It localises to the chloroplast thylakoid membrane. It catalyses the reaction ATP + H2O + 4 H(+)(in) = ADP + phosphate + 5 H(+)(out). Functionally, produces ATP from ADP in the presence of a proton gradient across the membrane. The catalytic sites are hosted primarily by the beta subunits. This is ATP synthase subunit beta, chloroplastic from Bowiea volubilis (Climbing onion).